The primary structure comprises 380 residues: DNA replication and repair protein RecF (380 aa).

30–37 (GENAQGKT) is an ATP binding site.

It belongs to the RecF family.

Its subcellular location is the cytoplasm. In terms of biological role, the RecF protein is involved in DNA metabolism; it is required for DNA replication and normal SOS inducibility. RecF binds preferentially to single-stranded, linear DNA. It also seems to bind ATP. The sequence is that of DNA replication and repair protein RecF from Synechococcus sp. (strain JA-3-3Ab) (Cyanobacteria bacterium Yellowstone A-Prime).